Reading from the N-terminus, the 83-residue chain is Exodeoxyribonuclease 7 small subunit (83 aa).

This sequence belongs to the XseB family. As to quaternary structure, heterooligomer composed of large and small subunits.

It is found in the cytoplasm. The enzyme catalyses Exonucleolytic cleavage in either 5'- to 3'- or 3'- to 5'-direction to yield nucleoside 5'-phosphates.. In terms of biological role, bidirectionally degrades single-stranded DNA into large acid-insoluble oligonucleotides, which are then degraded further into small acid-soluble oligonucleotides. In Afipia carboxidovorans (strain ATCC 49405 / DSM 1227 / KCTC 32145 / OM5) (Oligotropha carboxidovorans), this protein is Exodeoxyribonuclease 7 small subunit.